Here is a 390-residue protein sequence, read N- to C-terminus: MVIPELFSAGLILLLLFITGFVGMKMKIPDVVIFILLGIAVGGLLSGSHLLHFAGEVGIVLLFFMLGMEFPLKQLMSIAKKVLRAGILDVALSFGVTMAICMMMGLDVITSLIIGGVAYATSSSITAKMLESSKRMANPESEFMLGLLIFEDLVAPILVAVLVGLTAGMALTAGSMSLLVVKVVALVAGAVILGVFLFRKLGSFFDRHMKHDLFILFVIGLALMYGGLALYLDLSEVLGAFLAGIMLAEVKRTHELELMVVRFRDLLLPLFFLYFGTTISFSEGIPMIPLLILVLVWSVIAKVIVGVLGGRWYGLTKKVSLRAGLSLTQRGEFSIIIASLAAGSIKAFSSVFILASAMIGILLFQFAPSIANKFYGKKAKTSVKQHVGSA.

A run of 10 helical transmembrane segments spans residues 2–22, 31–51, 52–72, 94–114, 143–163, 178–198, 212–232, 266–286, 288–308, and 351–371; these read VIPE…TGFV, VVIF…SHLL, HFAG…EFPL, FGVT…SLII, FMLG…AVLV, LLVV…VFLF, DLFI…ALYL, LLLP…EGIP, IPLL…VGVL, and VFIL…PSIA.

It belongs to the monovalent cation:proton antiporter 2 (CPA2) transporter (TC 2.A.37) family. In terms of assembly, interacts with AmhM.

The protein resides in the cell membrane. AmhT alone exhibits antiport activity, but interaction with AmhM confers different properties, such as higher KM for potassium. Its function is as follows. Ammonium/proton antiporter that mediates the efflux of ammonium ions. Can also transport potassium or rubidium, but not sodium or lithium. The protein is Ammonium/H(+) antiporter subunit AmhT (amhT) of Alkalihalophilus pseudofirmus (strain ATCC BAA-2126 / JCM 17055 / OF4) (Bacillus pseudofirmus).